Consider the following 68-residue polypeptide: Large ribosomal subunit protein bL35 (68 aa).

This sequence belongs to the bacterial ribosomal protein bL35 family.

The polypeptide is Large ribosomal subunit protein bL35 (Wolbachia pipientis wMel).